The sequence spans 388 residues: Homoserine O-acetyltransferase (388 aa).

Residues 55–354 (PIVLIEHALT…PTGHDGFLIE (300 aa)) enclose the AB hydrolase-1 domain. The Nucleophile role is filled by Ser-150. Arg-220 lines the substrate pocket. Catalysis depends on residues Asp-318 and His-348. Asp-349 contacts substrate.

The protein belongs to the AB hydrolase superfamily. MetX family. As to quaternary structure, homodimer.

Its subcellular location is the cytoplasm. The catalysed reaction is L-homoserine + acetyl-CoA = O-acetyl-L-homoserine + CoA. It participates in amino-acid biosynthesis; L-methionine biosynthesis via de novo pathway; O-acetyl-L-homoserine from L-homoserine: step 1/1. Its function is as follows. Transfers an acetyl group from acetyl-CoA to L-homoserine, forming acetyl-L-homoserine. The polypeptide is Homoserine O-acetyltransferase (Corynebacterium urealyticum (strain ATCC 43042 / DSM 7109)).